Reading from the N-terminus, the 142-residue chain is Large ribosomal subunit protein uL13 (142 aa).

This sequence belongs to the universal ribosomal protein uL13 family. As to quaternary structure, part of the 50S ribosomal subunit.

In terms of biological role, this protein is one of the early assembly proteins of the 50S ribosomal subunit, although it is not seen to bind rRNA by itself. It is important during the early stages of 50S assembly. This is Large ribosomal subunit protein uL13 from Janthinobacterium sp. (strain Marseille) (Minibacterium massiliensis).